The following is a 172-amino-acid chain: C-phycocyanin beta chain (172 aa).

Asn-72 is subject to N4-methylasparagine. (2R,3E)-phycocyanobilin is bound by residues Cys-82 and Cys-153.

This sequence belongs to the phycobiliprotein family. In terms of assembly, heterodimer of an alpha and a beta subunit, which further assembles into trimers and the trimers into hexamers. The basic functional unit of phycobiliproteins is a ring-shaped hexamer formed from two back-to-back trimers contacting via the alpha chain subunits. The trimers are composed of alpha/beta subunit heterodimers arranged around a three-fold axis of symmetry. The phycoerythrins also contain a gamma subunit which is located in the center of the hexamer. Post-translationally, contains two covalently linked phycocyanobilin chromophores.

Its subcellular location is the plastid. The protein resides in the cyanelle thylakoid membrane. Its function is as follows. Light-harvesting photosynthetic bile pigment-protein from the phycobiliprotein complex (phycobilisome, PBS). Phycocyanin is the major phycobiliprotein in the PBS rod. This chain is C-phycocyanin beta chain (cpcB), found in Cyanophora paradoxa.